Here is a 238-residue protein sequence, read N- to C-terminus: Thrombin-like enzyme AhV_TL-I (238 aa).

Residues 1–229 (IIGGDECNIN…HLDWIENIIA (229 aa)) enclose the Peptidase S1 domain. 6 disulfides stabilise this stretch: cysteine 7–cysteine 141, cysteine 28–cysteine 44, cysteine 76–cysteine 236, cysteine 120–cysteine 190, cysteine 152–cysteine 169, and cysteine 180–cysteine 205. Residue histidine 43 is the Charge relay system of the active site. Asparagine 81 carries N-linked (GlcNAc...) asparagine glycosylation. Aspartate 88 serves as the catalytic Charge relay system. Catalysis depends on serine 184, which acts as the Charge relay system.

Belongs to the peptidase S1 family. Snake venom subfamily. As to quaternary structure, monomer. Post-translationally, N-glycosylated at Asn-81 by a disaccharide composed of two N-acetylglucosamine (NAG). The presence of this N-glycan deforms the enzyme and Removing the carbohydrate moiety increases the esterase activity, but induces a complete loss of contractile response on mouse thoracic aorta. As to expression, expressed by the venom gland.

The protein resides in the secreted. With respect to regulation, inhibited by PMSF, L-cysteine and partially by SBTI and leupeptin. In terms of biological role, thrombin-like enzyme that shows fibrinogenolytic activity against both the Aalpha (FGA) and Bbeta (FGB) chains of bovine fibrinogen. This enzyme has poor esterolytic activity upon BAEE substrate. It induces mouse thoracic aortic ring contraction with EC(50)=147 nmol/L. It shows vasoconstrictor effects that are independent of the enzymatic activity, but related to the release of calcium ions form the calcium store, potentially through the activation of ryanodine receptors. This Gloydius halys (Chinese water mocassin) protein is Thrombin-like enzyme AhV_TL-I.